Here is an 862-residue protein sequence, read N- to C-terminus: Transcription factor E2F7 (862 aa).

DNA-binding regions lie at residues 140–209 and 279–364; these read RKQK…CWHG and RKDK…KWIG. 3 disordered regions span residues 561-592, 617-643, and 788-862; these read PGSD…DAPL, TPEQ…NVGE, and KADS…SAGN. A compositionally biased stretch (polar residues) spans 564-574; the sequence is DSPTLEETTMS. A compositionally biased stretch (basic and acidic residues) spans 575–590; sequence KQERPTKRQLNDKDDA. Polar residues-rich tracts occupy residues 633–643 and 832–851; these read EPVTKHSNVGE and DVSS…SSAQ.

It belongs to the E2F/DP family. As to quaternary structure, homodimer and heterodimer: mainly forms homodimers and, to a lesser extent, heterodimers with e2f8.

The protein resides in the nucleus. Atypical E2F transcription factor that participates in various processes such as angiogenesis and polyploidization of specialized cells. Mainly acts as a transcription repressor that binds DNA independently of DP proteins and specifically recognizes the E2 recognition site 5'-TTTC[CG]CGC-3'. Directly represses transcription of classical E2F transcription factors such as e2f1. Acts as a regulator of S-phase by recognizing and binding the E2-related site 5'-TTCCCGCC-3' and mediating repression of G1/S-regulated genes. Acts as a promoter of sprouting angiogenesis, possibly by acting as a transcription activator. The protein is Transcription factor E2F7 (e2f7) of Xenopus tropicalis (Western clawed frog).